A 177-amino-acid chain; its full sequence is ATP synthase subunit delta, chloroplastic (177 aa).

It belongs to the ATPase delta chain family. In terms of assembly, F-type ATPases have 2 components, F(1) - the catalytic core - and F(0) - the membrane proton channel. F(1) has five subunits: alpha(3), beta(3), gamma(1), delta(1), epsilon(1). CF(0) has four main subunits: a(1), b(1), b'(1) and c(10-14). The alpha and beta chains form an alternating ring which encloses part of the gamma chain. F(1) is attached to F(0) by a central stalk formed by the gamma and epsilon chains, while a peripheral stalk is formed by the delta, b and b' chains.

The protein resides in the plastid. It localises to the chloroplast thylakoid membrane. Functionally, f(1)F(0) ATP synthase produces ATP from ADP in the presence of a proton or sodium gradient. F-type ATPases consist of two structural domains, F(1) containing the extramembraneous catalytic core and F(0) containing the membrane proton channel, linked together by a central stalk and a peripheral stalk. During catalysis, ATP synthesis in the catalytic domain of F(1) is coupled via a rotary mechanism of the central stalk subunits to proton translocation. Its function is as follows. This protein is part of the stalk that links CF(0) to CF(1). It either transmits conformational changes from CF(0) to CF(1) or is implicated in proton conduction. This chain is ATP synthase subunit delta, chloroplastic, found in Galdieria sulphuraria (Red alga).